A 105-amino-acid chain; its full sequence is Urease subunit gamma (105 aa).

Belongs to the urease gamma subunit family. In terms of assembly, heterotrimer of UreA (gamma), UreB (beta) and UreC (alpha) subunits. Three heterotrimers associate to form the active enzyme.

It localises to the cytoplasm. It catalyses the reaction urea + 2 H2O + H(+) = hydrogencarbonate + 2 NH4(+). The protein operates within nitrogen metabolism; urea degradation; CO(2) and NH(3) from urea (urease route): step 1/1. The protein is Urease subunit gamma of Bacillus subtilis (strain 168).